Reading from the N-terminus, the 300-residue chain is Glutamyl-Q tRNA(Asp) synthetase (300 aa).

L-glutamate contacts are provided by residues 8 to 12 and glutamate 44; that span reads RFAPS. Positions 11–21 match the 'HIGH' region motif; sequence PSPTGALHAGS. Residues cysteine 100, cysteine 102, tyrosine 126, and cysteine 130 each contribute to the Zn(2+) site. L-glutamate is bound by residues tyrosine 190 and arginine 208. The short motif at 246-250 is the 'KMSKS' region element; sequence KLSKQ. Residue lysine 249 participates in ATP binding.

Belongs to the class-I aminoacyl-tRNA synthetase family. GluQ subfamily. Requires Zn(2+) as cofactor.

In terms of biological role, catalyzes the tRNA-independent activation of glutamate in presence of ATP and the subsequent transfer of glutamate onto a tRNA(Asp). Glutamate is transferred on the 2-amino-5-(4,5-dihydroxy-2-cyclopenten-1-yl) moiety of the queuosine in the wobble position of the QUC anticodon. This chain is Glutamyl-Q tRNA(Asp) synthetase, found in Leptothrix cholodnii (strain ATCC 51168 / LMG 8142 / SP-6) (Leptothrix discophora (strain SP-6)).